The sequence spans 358 residues: Phospho-N-acetylmuramoyl-pentapeptide-transferase (358 aa).

Helical transmembrane passes span 26–46 (AIYA…WLID), 70–90 (GTPT…TLLW), 94–114 (TNVY…VGFV), 134–154 (MLWL…YPPF), 169–189 (ELGL…SNAV), 197–217 (GLAI…AYLA), 234–254 (AGEL…FLWF), 261–281 (VFMG…IAVI), 286–306 (IVLV…IVQV), and 335–355 (KIIV…LSTL).

This sequence belongs to the glycosyltransferase 4 family. MraY subfamily. Mg(2+) is required as a cofactor.

The protein localises to the cell inner membrane. The catalysed reaction is UDP-N-acetyl-alpha-D-muramoyl-L-alanyl-gamma-D-glutamyl-meso-2,6-diaminopimeloyl-D-alanyl-D-alanine + di-trans,octa-cis-undecaprenyl phosphate = di-trans,octa-cis-undecaprenyl diphospho-N-acetyl-alpha-D-muramoyl-L-alanyl-D-glutamyl-meso-2,6-diaminopimeloyl-D-alanyl-D-alanine + UMP. The protein operates within cell wall biogenesis; peptidoglycan biosynthesis. Functionally, catalyzes the initial step of the lipid cycle reactions in the biosynthesis of the cell wall peptidoglycan: transfers peptidoglycan precursor phospho-MurNAc-pentapeptide from UDP-MurNAc-pentapeptide onto the lipid carrier undecaprenyl phosphate, yielding undecaprenyl-pyrophosphoryl-MurNAc-pentapeptide, known as lipid I. The protein is Phospho-N-acetylmuramoyl-pentapeptide-transferase of Syntrophotalea carbinolica (strain DSM 2380 / NBRC 103641 / GraBd1) (Pelobacter carbinolicus).